The following is a 214-amino-acid chain: Thymidylate kinase (214 aa).

10 to 17 (GPDGAGKT) serves as a coordination point for ATP.

The protein belongs to the thymidylate kinase family.

The catalysed reaction is dTMP + ATP = dTDP + ADP. Functionally, phosphorylation of dTMP to form dTDP in both de novo and salvage pathways of dTTP synthesis. The polypeptide is Thymidylate kinase (Lacticaseibacillus casei (strain BL23) (Lactobacillus casei)).